A 147-amino-acid chain; its full sequence is Protein-export protein SecB (147 aa).

Belongs to the SecB family. In terms of assembly, homotetramer, a dimer of dimers. One homotetramer interacts with 1 SecA dimer.

It is found in the cytoplasm. One of the proteins required for the normal export of preproteins out of the cell cytoplasm. It is a molecular chaperone that binds to a subset of precursor proteins, maintaining them in a translocation-competent state. It also specifically binds to its receptor SecA. The protein is Protein-export protein SecB of Neisseria gonorrhoeae (strain ATCC 700825 / FA 1090).